The primary structure comprises 587 residues: Cyclic di-GMP phosphodiesterase PA2567 (587 aa).

The 130-residue stretch at 28 to 157 (DEVFEEILAA…LEHFARLVMA (130 aa)) folds into the GAF domain. A GGDEF domain is found at 192–327 (GALTVIAADL…GVGWARYNPP (136 aa)). The EAL domain maps to 335–587 (AFTLLTSLSQ…PEQLEDWLRR (253 aa)).

It catalyses the reaction 3',3'-c-di-GMP + H2O = 5'-phosphoguanylyl(3'-&gt;5')guanosine + H(+). Its function is as follows. Phosphodiesterase (PDE) that catalyzes the hydrolysis of cyclic diguanylate (c-di-GMP) to 5'-pGpG. In Pseudomonas aeruginosa (strain ATCC 15692 / DSM 22644 / CIP 104116 / JCM 14847 / LMG 12228 / 1C / PRS 101 / PAO1), this protein is Cyclic di-GMP phosphodiesterase PA2567.